The primary structure comprises 109 residues: Large ribosomal subunit protein uL22 (109 aa).

The protein belongs to the universal ribosomal protein uL22 family. As to quaternary structure, part of the 50S ribosomal subunit.

In terms of biological role, this protein binds specifically to 23S rRNA; its binding is stimulated by other ribosomal proteins, e.g. L4, L17, and L20. It is important during the early stages of 50S assembly. It makes multiple contacts with different domains of the 23S rRNA in the assembled 50S subunit and ribosome. Its function is as follows. The globular domain of the protein is located near the polypeptide exit tunnel on the outside of the subunit, while an extended beta-hairpin is found that lines the wall of the exit tunnel in the center of the 70S ribosome. In Dehalococcoides mccartyi (strain ATCC BAA-2266 / KCTC 15142 / 195) (Dehalococcoides ethenogenes (strain 195)), this protein is Large ribosomal subunit protein uL22.